The primary structure comprises 79 residues: Phosphoribosylformylglycinamidine synthase subunit PurS (79 aa).

It belongs to the PurS family. As to quaternary structure, homodimer. Part of the FGAM synthase complex composed of 1 PurL, 1 PurQ and 2 PurS subunits.

It is found in the cytoplasm. It carries out the reaction N(2)-formyl-N(1)-(5-phospho-beta-D-ribosyl)glycinamide + L-glutamine + ATP + H2O = 2-formamido-N(1)-(5-O-phospho-beta-D-ribosyl)acetamidine + L-glutamate + ADP + phosphate + H(+). It participates in purine metabolism; IMP biosynthesis via de novo pathway; 5-amino-1-(5-phospho-D-ribosyl)imidazole from N(2)-formyl-N(1)-(5-phospho-D-ribosyl)glycinamide: step 1/2. Part of the phosphoribosylformylglycinamidine synthase complex involved in the purines biosynthetic pathway. Catalyzes the ATP-dependent conversion of formylglycinamide ribonucleotide (FGAR) and glutamine to yield formylglycinamidine ribonucleotide (FGAM) and glutamate. The FGAM synthase complex is composed of three subunits. PurQ produces an ammonia molecule by converting glutamine to glutamate. PurL transfers the ammonia molecule to FGAR to form FGAM in an ATP-dependent manner. PurS interacts with PurQ and PurL and is thought to assist in the transfer of the ammonia molecule from PurQ to PurL. This chain is Phosphoribosylformylglycinamidine synthase subunit PurS, found in Mycobacterium leprae (strain TN).